Here is a 260-residue protein sequence, read N- to C-terminus: Thiazole synthase (260 aa).

The Schiff-base intermediate with DXP role is filled by Lys-96. Residues Gly-157, 184-185 (AG), and 206-207 (NT) contribute to the 1-deoxy-D-xylulose 5-phosphate site.

This sequence belongs to the ThiG family. As to quaternary structure, homotetramer. Forms heterodimers with either ThiH or ThiS.

It localises to the cytoplasm. It catalyses the reaction [ThiS sulfur-carrier protein]-C-terminal-Gly-aminoethanethioate + 2-iminoacetate + 1-deoxy-D-xylulose 5-phosphate = [ThiS sulfur-carrier protein]-C-terminal Gly-Gly + 2-[(2R,5Z)-2-carboxy-4-methylthiazol-5(2H)-ylidene]ethyl phosphate + 2 H2O + H(+). It participates in cofactor biosynthesis; thiamine diphosphate biosynthesis. Functionally, catalyzes the rearrangement of 1-deoxy-D-xylulose 5-phosphate (DXP) to produce the thiazole phosphate moiety of thiamine. Sulfur is provided by the thiocarboxylate moiety of the carrier protein ThiS. In vitro, sulfur can be provided by H(2)S. The polypeptide is Thiazole synthase (Nitrobacter winogradskyi (strain ATCC 25391 / DSM 10237 / CIP 104748 / NCIMB 11846 / Nb-255)).